The following is a 443-amino-acid chain: MSKTYHFIGIKGAGMSALALLLHQMGHKVQGSDVEKYYFTQRGLEQAGITILPFSEDNISPDMELIAGNAFREDNNSEVAYAMRHQLPFKRYHEFLGEFMKQFTSLGVAGAHGKTSTTGLLSHVLKHMAATSYLIGDGTGHGAADARYFVFESDEYERHFMPYHPEYSIITNIDFDHPDYFTGLDDVFNAFNDYAKQVKKALFVYGEDEELRKISSPAPIYYYGFEDTDDFVAFDITRTTNGSDFKVRHHHKLIGQFHLPAYGRHNILNATAVIANLFIAGFDMKLVAEHLKSFSGVKRRFTEKVINDTIIIDDFAHHPTEIIATLDAARQKYPNKEIIAIFQPHTFTRTIALLDDFAHALNEADSVYLAPIYGSAREIDKGDVKVEDLAAKVERPAKVISVDNVSPLLDHDNAVYVFMGAGDIQLYERSFEELLANLTKNNQ.

110-116 (GAHGKTS) contributes to the ATP binding site.

The protein belongs to the MurCDEF family.

Its subcellular location is the cytoplasm. The enzyme catalyses UDP-N-acetyl-alpha-D-muramate + L-alanine + ATP = UDP-N-acetyl-alpha-D-muramoyl-L-alanine + ADP + phosphate + H(+). Its pathway is cell wall biogenesis; peptidoglycan biosynthesis. Functionally, cell wall formation. The protein is UDP-N-acetylmuramate--L-alanine ligase of Streptococcus equi subsp. zooepidemicus (strain H70).